Here is a 244-residue protein sequence, read N- to C-terminus: tRNA (guanine-N(7)-)-methyltransferase (244 aa).

The segment covering 1–10 (MSDTPQSPAQ) has biased composition (polar residues). A disordered region spans residues 1–20 (MSDTPQSPAQDSLAEHDEAR). S-adenosyl-L-methionine is bound by residues E74, E99, D126, and D149. Residue D149 is part of the active site. Substrate is bound by residues K153, D185, and 222–225 (TKFE).

It belongs to the class I-like SAM-binding methyltransferase superfamily. TrmB family.

The catalysed reaction is guanosine(46) in tRNA + S-adenosyl-L-methionine = N(7)-methylguanosine(46) in tRNA + S-adenosyl-L-homocysteine. Its pathway is tRNA modification; N(7)-methylguanine-tRNA biosynthesis. Functionally, catalyzes the formation of N(7)-methylguanine at position 46 (m7G46) in tRNA. This is tRNA (guanine-N(7)-)-methyltransferase from Pseudomonas paraeruginosa (strain DSM 24068 / PA7) (Pseudomonas aeruginosa (strain PA7)).